Reading from the N-terminus, the 441-residue chain is ATP-dependent RNA helicase sub2 (441 aa).

Residues 19–29 (DAAATTAAPAA) show a composition bias toward low complexity. A disordered region spans residues 19-43 (DAAATTAAPAANGAQDKKGDLTVSG). Positions 58-86 (TGFRDFLLKGELLRAITDCGFEHPSEVQQ) match the Q motif motif. One can recognise a Helicase ATP-binding domain in the interval 89–264 (IPTAILNVDV…KKFMRNPLEV (176 aa)). Residue 102–109 (AKSGLGKT) participates in ATP binding. The DEAD box motif lies at 211 to 214 (DECD). The Helicase C-terminal domain maps to 276–437 (GLQQYYIKLS…EYPEGGVDSS (162 aa)).

This sequence belongs to the DEAD box helicase family. DECD subfamily.

The protein localises to the nucleus. It carries out the reaction ATP + H2O = ADP + phosphate + H(+). Functionally, ATP-binding RNA helicase involved in transcription elongation and required for the export of mRNA out of the nucleus. SUB2 also plays a role in pre-mRNA splicing and spliceosome assembly. May be involved in rDNA and telomeric silencing, and maintenance of genome integrity. The polypeptide is ATP-dependent RNA helicase sub2 (sub2) (Aspergillus clavatus (strain ATCC 1007 / CBS 513.65 / DSM 816 / NCTC 3887 / NRRL 1 / QM 1276 / 107)).